The chain runs to 96 residues: Nucleoid-associated protein CCA_00330 (96 aa).

Belongs to the YbaB/EbfC family. As to quaternary structure, homodimer.

It is found in the cytoplasm. It localises to the nucleoid. In terms of biological role, binds to DNA and alters its conformation. May be involved in regulation of gene expression, nucleoid organization and DNA protection. The chain is Nucleoid-associated protein CCA_00330 from Chlamydia caviae (strain ATCC VR-813 / DSM 19441 / 03DC25 / GPIC) (Chlamydophila caviae).